Reading from the N-terminus, the 282-residue chain is Putative peroxisomal biogenesis factor 19 (282 aa).

A disordered region spans residues 73-95 (QEEAMKKAGADPSEGEGEQPLDP). A Cysteine methyl ester modification is found at Cys-279. Cys-279 carries S-farnesyl cysteine lipidation. The propeptide at 280–282 (SIM) is removed in mature form.

The protein belongs to the peroxin-19 family.

The protein resides in the peroxisome. The chain is Putative peroxisomal biogenesis factor 19 (prx-19) from Caenorhabditis elegans.